The sequence spans 248 residues: Geranylgeranylglyceryl phosphate synthase (248 aa).

Positions 25 and 50 each coordinate Mg(2+). Sn-glycerol 1-phosphate contacts are provided by residues 170-176 (YLEAGSG), 201-202 (GG), and 223-224 (GT).

It belongs to the GGGP/HepGP synthase family. Group II subfamily. It depends on Mg(2+) as a cofactor.

It is found in the cytoplasm. The catalysed reaction is sn-glycerol 1-phosphate + (2E,6E,10E)-geranylgeranyl diphosphate = sn-3-O-(geranylgeranyl)glycerol 1-phosphate + diphosphate. Its pathway is membrane lipid metabolism; glycerophospholipid metabolism. Functionally, prenyltransferase that catalyzes the transfer of the geranylgeranyl moiety of geranylgeranyl diphosphate (GGPP) to the C3 hydroxyl of sn-glycerol-1-phosphate (G1P). This reaction is the first ether-bond-formation step in the biosynthesis of archaeal membrane lipids. This Methanococcus aeolicus (strain ATCC BAA-1280 / DSM 17508 / OCM 812 / Nankai-3) protein is Geranylgeranylglyceryl phosphate synthase.